Here is a 1070-residue protein sequence, read N- to C-terminus: Probable arabinosyltransferase C (1070 aa).

Helical transmembrane passes span 10 to 32 (IARL…TPFL), 210 to 232 (LLKT…ALHL), 247 to 269 (SRWW…WHFV), 399 to 421 (VATS…LFSG), 425 to 442 (IASI…LTIL), 449 to 471 (FGAV…LIFR), 512 to 534 (SVAR…AMSL), 547 to 564 (SRRI…MMFT), 574 to 596 (VFAG…AALR), 603 to 625 (VFAA…WWYV), 645 to 664 (TALL…FHFV), and 685 to 707 (SPIA…MAMI).

Belongs to the emb family.

Its subcellular location is the cell membrane. Its function is as follows. Arabinosyl transferase responsible for the polymerization of arabinose into the arabinan of arabinogalactan. The protein is Probable arabinosyltransferase C (embC) of Mycobacterium leprae (strain TN).